Reading from the N-terminus, the 355-residue chain is Countin-like protein (355 aa).

A signal peptide spans 1–27 (MNKSLFSLILLIITIFNLASNINIVSA). Residues 63–83 (NNHEDNNNNNNNNNNNNNAYN) form a disordered region. The segment covering 69 to 83 (NNNNNNNNNNNNAYN) has biased composition (low complexity). The 85-residue stretch at 93–177 (GDIECVVCLD…ELITACSTPK (85 aa)) folds into the Saposin B-type domain. 3 disulfides stabilise this stretch: Cys97-Cys173, Cys100-Cys167, and Cys128-Cys140. Asn132, Asn209, Asn242, Asn253, Asn254, Asn282, and Asn303 each carry an N-linked (GlcNAc...) asparagine glycan. The interval 290–355 (ISNPTPTPTP…SSHYKNKINK (66 aa)) is disordered. A compositionally biased stretch (low complexity) spans 301–342 (PSNSTTPTPTPTNSTPTPTSTSTPTSTPTSTPTPTPTSSSST). Residues 345 to 355 (HSSHYKNKINK) show a composition bias toward basic residues.

The protein belongs to the countin family.

Its subcellular location is the secreted. The protein is Countin-like protein of Dictyostelium discoideum (Social amoeba).